The sequence spans 79 residues: uncharacterized protein (79 aa).

Its subcellular location is the mitochondrion. This is an uncharacterized protein from Marchantia polymorpha (Common liverwort).